A 630-amino-acid chain; its full sequence is tRNA uridine 5-carboxymethylaminomethyl modification enzyme MnmG (630 aa).

14–19 serves as a coordination point for FAD; sequence GGGHAG. Residue 282 to 296 participates in NAD(+) binding; it reads GTRYCPSIEDKVRKF.

This sequence belongs to the MnmG family. Homodimer. Heterotetramer of two MnmE and two MnmG subunits. It depends on FAD as a cofactor.

The protein localises to the cytoplasm. In terms of biological role, NAD-binding protein involved in the addition of a carboxymethylaminomethyl (cmnm) group at the wobble position (U34) of certain tRNAs, forming tRNA-cmnm(5)s(2)U34. This chain is tRNA uridine 5-carboxymethylaminomethyl modification enzyme MnmG, found in Treponema pallidum (strain Nichols).